A 606-amino-acid polypeptide reads, in one-letter code: MSRDEKNATLPHIRNFSIIAHIDHGKSTLSDRIIQICGGLTERELKEQVLDSMDLERERGITIKAQSVTLDYKAEDGQVYQLNFIDTPGHVDFSYEVSRSLYACEGALLVVDAGQGVEAQSVANCYTAVEQGLEVLPVLNKMDLPQADPDRVAHEVEEIIGIDASDACRVSAKSGLGMEALLERLVRDVPPPKGDPEAPLQALIVDSWFDNYLGVISLVRLFDGTIKKGDKIRMKSTERAWEVGEVGIFTPKRKETGILRAGEVGFVVAGIKDIHGAPVGDTIVHAKGGEDVARLPGFQKVKPQVYAGMFPVSSDDYEDFRDALEKLALNDASLDYEPENSDALGFGFRVGFLGTLHMEIVQERLEREYNLDLLTTAPTVIYELAMKDGETRYVSNPSKLPDMADIEEMREPVVRASILVPQDFVGNVISECEQRRGTQLDMLFLGSQIQLTYELPMSEVVMDFFDRLKSISRGYASLEYNFERFEAAKLVRLDVLINGDRVDALATIVHRDHAHPRGRALVEKMKELIPRQMFDVAIQATLGGQVVARSTVKALRKNVTAKCYGGDVTRKRKLLEKQKAGKKRMKQVGKVEIPQDAFLAVLKMND.

The tr-type G domain occupies 11-193; sequence PHIRNFSIIA…RLVRDVPPPK (183 aa). Residues 23-28 and 140-143 contribute to the GTP site; these read DHGKST and NKMD.

The protein belongs to the TRAFAC class translation factor GTPase superfamily. Classic translation factor GTPase family. LepA subfamily.

It is found in the cell inner membrane. The catalysed reaction is GTP + H2O = GDP + phosphate + H(+). In terms of biological role, required for accurate and efficient protein synthesis under certain stress conditions. May act as a fidelity factor of the translation reaction, by catalyzing a one-codon backward translocation of tRNAs on improperly translocated ribosomes. Back-translocation proceeds from a post-translocation (POST) complex to a pre-translocation (PRE) complex, thus giving elongation factor G a second chance to translocate the tRNAs correctly. Binds to ribosomes in a GTP-dependent manner. The polypeptide is Elongation factor 4 (Chromohalobacter salexigens (strain ATCC BAA-138 / DSM 3043 / CIP 106854 / NCIMB 13768 / 1H11)).